Consider the following 428-residue polypeptide: tRNA(Ile)-lysidine synthase (428 aa).

Residue 28–33 (SGGVDS) participates in ATP binding.

The protein belongs to the tRNA(Ile)-lysidine synthase family.

The protein localises to the cytoplasm. It catalyses the reaction cytidine(34) in tRNA(Ile2) + L-lysine + ATP = lysidine(34) in tRNA(Ile2) + AMP + diphosphate + H(+). In terms of biological role, ligates lysine onto the cytidine present at position 34 of the AUA codon-specific tRNA(Ile) that contains the anticodon CAU, in an ATP-dependent manner. Cytidine is converted to lysidine, thus changing the amino acid specificity of the tRNA from methionine to isoleucine. The protein is tRNA(Ile)-lysidine synthase of Streptococcus pyogenes serotype M1.